The primary structure comprises 346 residues: Immunoglobulin heavy constant alpha (346 aa).

Ig-like domains are found at residues 6–96 (PSIF…KSVD), 118–212 (PRLS…VSIT), and 221–323 (PQVH…KSID). A disulfide bond links Cys26 and Cys83. Asn134 carries N-linked (GlcNAc...) (complex) asparagine glycosylation. Disulfide bonds link Cys139–Cys196 and Cys243–Cys306. N-linked (GlcNAc...) (complex) asparagine glycosylation is present at Asn333.

Immunoglobulins are composed of two identical heavy chains and two identical light chains; disulfide-linked. Monomeric or polymeric. Part of the secretory IgA (sIgA) complex that consists of two, four or five IgA monomers, and two additional non-Ig polypeptides, namely the JCHAIN and the secretory component (the proteolytic product of PIGR). Post-translationally, N-glycosylated. N-glycans attached to Asn-134 varies from differentially fucosylated complex and hybrid to sialylated with N-glycoyl neuraminic acid types: GlcNAc2Man3GlcNAc2(Fuc); GlcNAc1Man4GlcNAc2(Fuc); GlcNAc1Man4GlcNAc2; Gal1GlcNAc2Man3GlcNAc2(Fuc); GlcNAc2Man3GlcNAc2; Gal1GlcNAc2Man3GlcNAc2; GlcNAc1Man3GlcNAc2; GlcNAc1Man2GlcNAc2 and NeuGc1Gal1GlcNAc2Man3GlcNAc2(Fuc). N-glycans attached to Asn-333 are mainly fucosylated complex types: GlcNAc2Man3GlcNAc2; GlcNAc1Man3GlcNAc2; GlcNAc1Man3GlcNAc2(Fuc); GlcNAc2Man3GlcNAc2(Fuc); Gal1GlcNAc2Man3GlcNAc2(Fuc); NeuGc1Gal1GlcNAc1Man3GlcNAc2(Fuc); NeuGc1Gal1GlcNAc2Man3GlcNAc2(Fuc) and NeuAc1Gal1GlcNAc2Man3GlcNAc2(Fuc).

Its subcellular location is the secreted. It localises to the cell membrane. Its function is as follows. Constant region of immunoglobulin heavy chains. Immunoglobulins, also known as antibodies, are membrane-bound or secreted glycoproteins produced by B lymphocytes. In the recognition phase of humoral immunity, the membrane-bound immunoglobulins serve as receptors which, upon binding of a specific antigen, trigger the clonal expansion and differentiation of B lymphocytes into immunoglobulins-secreting plasma cells. Secreted immunoglobulins mediate the effector phase of humoral immunity, which results in the elimination of bound antigens. The antigen binding site is formed by the variable domain of one heavy chain, together with that of its associated light chain. Thus, each immunoglobulin has two antigen binding sites with remarkable affinity for a particular antigen. The variable domains are assembled by a process called V-(D)-J rearrangement and can then be subjected to somatic hypermutations which, after exposure to antigen and selection, allow affinity maturation for a particular antigen. Ig alpha is the major immunoglobulin class in body secretions. This chain is Immunoglobulin heavy constant alpha (IGHA), found in Equus asinus (Donkey).